The primary structure comprises 470 residues: Protein escargot (470 aa).

The tract at residues 271–309 (LNLNTSQPGEQAAAKTGDMSPETMPNASAKKDKNQPPRY) is disordered. 4 C2H2-type zinc fingers span residues 309-331 (YQCP…QQFH), 344-366 (FSCK…IRTH), 370-392 (CKCN…IRTH), and 398-420 (FSCQ…LQTH). A C2H2-type 5; atypical zinc finger spans residues 426-449 (YSCTSCSKTFSRMSLLTKHSEGGC). The segment at 448–470 (GCPGGSAGSSSSSELNYAGYAEP) is disordered.

The protein belongs to the snail C2H2-type zinc-finger protein family. Expression is complex and dynamic. In early embryogenesis, expression begins on the dorsal side of the embryo. Expressed in a pattern of longitudinal stripes early in germband elongation. Later in embryogenesis, expression is in cells that correspond to the wing, haltere, leg and genital imaginal disks and the abdominal histoblasts. In the embryonic leg disk, expression is restricted to imaginal cells. Also expressed in the central nervous system (CNS), tracheae and head of stage 14 embryos. CNS and tracheal expression decays during later stages, though head expression persists until late in embryogenesis. In third instar larvae, expression is seen in the brain and in regions of many imaginal tissues including the eye-antennal, wing, leg and haltere disks. Expressed in embryonic, larval and adult male germline stem cells and in the somatic cells of the embryonic gonads.

Its subcellular location is the nucleus. Its function is as follows. Transcription factor that can both stimulate and repress transcription. Binds to the consensus DNA sequence 5'-A/GCAGGTG-3'. Regulates cell motility and adhesion during tracheal morphogenesis by stimulating transcription of the DE-cadherin gene shg at branch tips, thereby promoting tracheal tube fusion. Maintains diploidy in imaginal cells by inhibiting the transcription of genes required for endoreplication. Required for development of the genital disk and acts as an intrinsic determinant of wing cell fate. The somatic protein is required for maintenance of male germ cells. Acts with other members of the snail protein family to control embryonic central nervous system development. The chain is Protein escargot (esg) from Drosophila melanogaster (Fruit fly).